A 29-amino-acid polypeptide reads, in one-letter code: Cytochrome b6-f complex subunit 8 (29 aa).

A helical membrane pass occupies residues 3-23 (IVGIAWAALMVVFTFSLSLVV).

Belongs to the PetN family. In terms of assembly, the 4 large subunits of the cytochrome b6-f complex are cytochrome b6, subunit IV (17 kDa polypeptide, PetD), cytochrome f and the Rieske protein, while the 4 small subunits are PetG, PetL, PetM and PetN. The complex functions as a dimer.

It localises to the plastid. The protein resides in the chloroplast thylakoid membrane. Component of the cytochrome b6-f complex, which mediates electron transfer between photosystem II (PSII) and photosystem I (PSI), cyclic electron flow around PSI, and state transitions. This chain is Cytochrome b6-f complex subunit 8, found in Cryptomeria japonica (Japanese cedar).